The sequence spans 640 residues: Chaperone protein HtpG (640 aa).

The tract at residues 1–343 (MQTAENVEHL…SNDLPLNVSR (343 aa)) is a; substrate-binding. The segment at 344–564 (EILQESKDID…THDMSGNLGR (221 aa)) is b. Residues 565–640 (LLKSAGQKVP…LLLQNILSGK (76 aa)) are c.

The protein belongs to the heat shock protein 90 family. Homodimer.

It localises to the cytoplasm. Molecular chaperone. Has ATPase activity. The sequence is that of Chaperone protein HtpG from Nitrosomonas eutropha (strain DSM 101675 / C91 / Nm57).